Here is a 369-residue protein sequence, read N- to C-terminus: tRNA-specific 2-thiouridylase MnmA (369 aa).

ATP-binding positions include 12–19 (GMSGGVDS) and Met-38. Positions 98 to 100 (NPD) are interaction with target base in tRNA. The active-site Nucleophile is the Cys-103. Residues Cys-103 and Cys-200 are joined by a disulfide bond. Gly-128 provides a ligand contact to ATP. Residues 150 to 152 (KDQ) are interaction with tRNA. The active-site Cysteine persulfide intermediate is the Cys-200. The tract at residues 312 to 313 (RY) is interaction with tRNA.

It belongs to the MnmA/TRMU family. In terms of assembly, interacts with TusE.

The protein resides in the cytoplasm. It carries out the reaction S-sulfanyl-L-cysteinyl-[protein] + uridine(34) in tRNA + AH2 + ATP = 2-thiouridine(34) in tRNA + L-cysteinyl-[protein] + A + AMP + diphosphate + H(+). In terms of biological role, catalyzes the 2-thiolation of uridine at the wobble position (U34) of tRNA(Lys), tRNA(Glu) and tRNA(Gln), leading to the formation of s(2)U34, the first step of tRNA-mnm(5)s(2)U34 synthesis. Sulfur is provided by IscS, via a sulfur-relay system. Binds ATP and its substrate tRNAs. This Sodalis glossinidius (strain morsitans) protein is tRNA-specific 2-thiouridylase MnmA.